We begin with the raw amino-acid sequence, 348 residues long: Uroporphyrinogen decarboxylase (348 aa).

Residues 23 to 27, Asp-72, Tyr-148, Ser-203, and His-316 each bind substrate; that span reads RQAGR.

Belongs to the uroporphyrinogen decarboxylase family. As to quaternary structure, homodimer.

It is found in the cytoplasm. It carries out the reaction uroporphyrinogen III + 4 H(+) = coproporphyrinogen III + 4 CO2. The protein operates within porphyrin-containing compound metabolism; protoporphyrin-IX biosynthesis; coproporphyrinogen-III from 5-aminolevulinate: step 4/4. In terms of biological role, catalyzes the decarboxylation of four acetate groups of uroporphyrinogen-III to yield coproporphyrinogen-III. The polypeptide is Uroporphyrinogen decarboxylase (Myxococcus xanthus (strain DK1622)).